The chain runs to 330 residues: Cyclin-dependent kinase 7 (330 aa).

Residues 5–289 (YDTIKHLGEG…CTQSLQMEYF (285 aa)) enclose the Protein kinase domain. ATP contacts are provided by residues 11-19 (LGEGQFANV) and Lys-34. Asp-130 serves as the catalytic Proton acceptor. Position 163 is a phosphothreonine (Thr-163). The segment at 305-330 (KKQQPQKRSRRLDDDGTRPVRRLNFD) is disordered. Residues 315-330 (RLDDDGTRPVRRLNFD) are compositionally biased toward basic and acidic residues.

The protein belongs to the protein kinase superfamily. CMGC Ser/Thr protein kinase family. CDC2/CDKX subfamily. In terms of assembly, catalytic component which, in association with cyclin H (cyh-1) and mat1, is likely to form the CAK complex.

The enzyme catalyses L-seryl-[protein] + ATP = O-phospho-L-seryl-[protein] + ADP + H(+). It carries out the reaction L-threonyl-[protein] + ATP = O-phospho-L-threonyl-[protein] + ADP + H(+). It catalyses the reaction [DNA-directed RNA polymerase] + ATP = phospho-[DNA-directed RNA polymerase] + ADP + H(+). In terms of biological role, serine/threonine kinase involved in cell cycle control and in RNA polymerase II-mediated RNA transcription. Required for maintaining chromosome ploidy. May phosphorylate the large subunit of RNA polymerase II, ama-1. In Caenorhabditis elegans, this protein is Cyclin-dependent kinase 7.